Consider the following 114-residue polypeptide: MTSLQLSIVHRLPQNYRWSAGFAGSKVEPIPQNGPCGDNSLVALKLLSPDGDNAWSVMYKLSQALSDIEVPCSVLECEGEPCLFVNRQDEFAATCRLKNFGVAIAEPFSNYNPF.

This is an uncharacterized protein from Escherichia coli O6:H1 (strain CFT073 / ATCC 700928 / UPEC).